The sequence spans 433 residues: Succinate--CoA ligase [GDP-forming] subunit beta, mitochondrial (433 aa).

The N-terminal 38 residues, 1–38 (IPAAPVAAQARKLLRDLAFRPPLLAARSQVVQLTPRRW), are a transit peptide targeting the mitochondrion. An ATP-grasp domain is found at 47–275 (KKLMSDNGVK…NAEFRQKDIF (229 aa)). GTP is bound at residue Gln-58. Position 74 is an N6-acetyllysine (Lys-74). Lys-79 is subject to N6-succinyllysine. 91-93 (GRG) is a GTP binding site. Lys-133 and Lys-140 each carry N6-acetyllysine. Residue Leu-147 participates in GTP binding. The residue at position 162 (Ser-162) is a Phosphoserine. An N6-acetyllysine mark is found at Lys-201 and Lys-228. The Mg(2+) site is built by Asn-244 and Asp-258. N6-acetyllysine occurs at positions 272 and 292. A substrate-binding site is contributed by Asn-309. The residue at position 339 (Lys-339) is an N6-succinyllysine. Lys-348 bears the N6-acetyllysine mark. A substrate-binding site is contributed by 366–368 (GIV). N6-acetyllysine is present on residues Lys-387 and Lys-424.

This sequence belongs to the succinate/malate CoA ligase beta subunit family. GTP-specific subunit beta subfamily. As to quaternary structure, heterodimer of an alpha and a beta subunit. The beta subunit determines specificity for GTP. It depends on Mg(2+) as a cofactor.

It is found in the mitochondrion. The catalysed reaction is GTP + succinate + CoA = succinyl-CoA + GDP + phosphate. Its pathway is carbohydrate metabolism; tricarboxylic acid cycle; succinate from succinyl-CoA (ligase route): step 1/1. Functionally, GTP-specific succinyl-CoA synthetase functions in the citric acid cycle (TCA), coupling the hydrolysis of succinyl-CoA to the synthesis of GTP and thus represents the only step of substrate-level phosphorylation in the TCA. The beta subunit provides nucleotide specificity of the enzyme and binds the substrate succinate, while the binding sites for coenzyme A and phosphate are found in the alpha subunit. The sequence is that of Succinate--CoA ligase [GDP-forming] subunit beta, mitochondrial from Sus scrofa (Pig).